The sequence spans 608 residues: Aspartate--tRNA(Asp/Asn) ligase (608 aa).

Glutamate 187 contributes to the L-aspartate binding site. The segment at 211–214 (QQFK) is aspartate. Residues arginine 233 and histidine 461 each contribute to the L-aspartate site. An ATP-binding site is contributed by 233 to 235 (RDE). ATP is bound at residue glutamate 495. Arginine 502 contacts L-aspartate. 547-550 (GLDR) is an ATP binding site.

The protein belongs to the class-II aminoacyl-tRNA synthetase family. Type 1 subfamily. Homodimer.

The protein localises to the cytoplasm. It carries out the reaction tRNA(Asx) + L-aspartate + ATP = L-aspartyl-tRNA(Asx) + AMP + diphosphate. In terms of biological role, aspartyl-tRNA synthetase with relaxed tRNA specificity since it is able to aspartylate not only its cognate tRNA(Asp) but also tRNA(Asn). Reaction proceeds in two steps: L-aspartate is first activated by ATP to form Asp-AMP and then transferred to the acceptor end of tRNA(Asp/Asn). This is Aspartate--tRNA(Asp/Asn) ligase from Chlorobium phaeobacteroides (strain BS1).